Reading from the N-terminus, the 271-residue chain is CAAX prenyl protease 2 (271 aa).

Topologically, residues 1–9 (MISSYKYNP) are extracellular. Residues 10-30 (KLYFLSTFVVTYILWFTGAYL) form a helical membrane-spanning segment. Topologically, residues 31–38 (SFSSTYSG) are cytoplasmic. Residues 39–59 (IYMLIMLPGLMAPFIISTILI) traverse the membrane as a helical segment. Over 60–82 (AKSKNNELKKDFINRLFNLKLIN) the chain is Extracellular. A helical membrane pass occupies residues 83–105 (LKTIPVVFLLMPAVILLSILLSI). The Cytoplasmic portion of the chain corresponds to 106–125 (PFGGSISQFQFSGGFSFSTD). The chain crosses the membrane as a helical span at residues 126-149 (FVPVLFLLLLAATFEELGWRGYAF). Glutamate 140 acts as the Proton donor/acceptor in catalysis. The Extracellular portion of the chain corresponds to 150-159 (DSLQSRYSLF). A helical transmembrane segment spans residues 160-179 (KASILFGIFWSLWHFPLIFV). Histidine 173 functions as the Proton donor/acceptor in the catalytic mechanism. At 180-192 (NNSYQYEIFNQSI) the chain is on the cytoplasmic side. A helical membrane pass occupies residues 193–213 (WYGLNFFLSILPMGIIITWMC). The Extracellular segment spans residues 214–219 (LKNRKS). A helical membrane pass occupies residues 220–237 (IILAIIFHFLINLNQELL). The Cytoplasmic portion of the chain corresponds to 238 to 243 (AITQDT). The chain crosses the membrane as a helical span at residues 244 to 263 (KIIETGVLFLVAAAIILYDK). Residues 264 to 271 (KMFFEKLG) lie on the Extracellular side of the membrane.

This sequence belongs to the peptidase U48 family.

It localises to the cell membrane. The catalysed reaction is Hydrolyzes the peptide bond -P2-(S-farnesyl or geranylgeranyl)C-P1'-P2'-P3'-COOH where P1' and P2' are amino acids with aliphatic sidechains and P3' is any C-terminal residue.. Activity is unaffected by metalloprotease inhibitors 5 mM EDTA and 5 mM Zn(2+). Activity partially inhibited by 1,10-phenanthroline and 1,7-phenanthroline. Protease involved in the processing of a variety of prenylated proteins containing the C-terminal CAAX motif, where C is a cysteine modified with an isoprenoid lipid, A is an aliphatic amino acid and X is any C-terminal amino acid. Proteolytically removes the C-terminal three residues of farnesylated proteins, leaving the prenylated cysteine as the new C-terminus. Hydrolysis depends on a farnesylated cysteine residue and no activity is shown towards geranylgeranylated peptides. In Methanococcus maripaludis (strain DSM 14266 / JCM 13030 / NBRC 101832 / S2 / LL), this protein is CAAX prenyl protease 2.